The following is a 205-amino-acid chain: Holliday junction branch migration complex subunit RuvA (205 aa).

Residues 1–64 (MIGKLRGLID…EDQIKLFGFR (64 aa)) are domain I. A domain II region spans residues 65–143 (SDVEREWFRL…AFANVDPGVV (79 aa)). The interval 144–154 (RLSGAIEESRA) is flexible linker. The tract at residues 154-205 (APQPVADAISALINLGYGQPQAAAAIAAASRAAGDKAETAQLIRLGLKELAK) is domain III.

Belongs to the RuvA family. As to quaternary structure, homotetramer. Forms an RuvA(8)-RuvB(12)-Holliday junction (HJ) complex. HJ DNA is sandwiched between 2 RuvA tetramers; dsDNA enters through RuvA and exits via RuvB. An RuvB hexamer assembles on each DNA strand where it exits the tetramer. Each RuvB hexamer is contacted by two RuvA subunits (via domain III) on 2 adjacent RuvB subunits; this complex drives branch migration. In the full resolvosome a probable DNA-RuvA(4)-RuvB(12)-RuvC(2) complex forms which resolves the HJ.

It is found in the cytoplasm. Functionally, the RuvA-RuvB-RuvC complex processes Holliday junction (HJ) DNA during genetic recombination and DNA repair, while the RuvA-RuvB complex plays an important role in the rescue of blocked DNA replication forks via replication fork reversal (RFR). RuvA specifically binds to HJ cruciform DNA, conferring on it an open structure. The RuvB hexamer acts as an ATP-dependent pump, pulling dsDNA into and through the RuvAB complex. HJ branch migration allows RuvC to scan DNA until it finds its consensus sequence, where it cleaves and resolves the cruciform DNA. The sequence is that of Holliday junction branch migration complex subunit RuvA from Bradyrhizobium sp. (strain ORS 278).